A 372-amino-acid polypeptide reads, in one-letter code: MNRSIDLSMYSVRTDLAIEAHEIAVEERLQQKRESASPIEGVIIHDREIDGIKLSHVEVTEEGAKSIGKKPGNYLTIEAQGIREHNTELQQKVQDIFAKEFNAFLRKLDIRKESSCLVVGLGNSNVTPDALGPLTVENLLITRHLFHLQPESVEEGFRPVSAIAPGVMGTTGIETSDIIHGIVEKTKPDFVIVIDALAARSIERVNATIQISDTGIHPGSGVGNKRKELSKETLGIPVISIGVPTVVDAVSITSDTIDFILKHFGREMREGKRPSSALAPAGWTFGKKKRLTEEDMPSTEQRSTFLGIIGTLEEEEKRRLIYEVLSPLGHNLMVTPKEVDMFIEDMANLLASGLNAALHEQIDQDNTGSYTH.

The propeptide occupies 1 to 15 (MNRSIDLSMYSVRTD).

This sequence belongs to the peptidase A25 family. As to quaternary structure, homotetramer. In terms of processing, autoproteolytically processed. The inactive tetrameric zymogen termed p46 autoprocesses to a smaller form termed p41, which is active only during spore germination.

It carries out the reaction Endopeptidase action with P4 Glu or Asp, P1 preferably Glu &gt; Asp, P1' hydrophobic and P2' Ala.. Functionally, initiates the rapid degradation of small, acid-soluble proteins during spore germination. This is Germination protease from Geobacillus sp. (strain WCH70).